We begin with the raw amino-acid sequence, 130 residues long: Cholecystokinin (130 aa).

The first 20 residues, 1–20, serve as a signal peptide directing secretion; sequence MYSGICICVFLAVLSASSFG. Positions 21 to 48 are excised as a propeptide; the sequence is QQTAGSHNGNPLAAELEQSLTEHHRHVR. A disordered region spans residues 40–59; it reads LTEHHRHVRAPSSAGPLKPV. Tyrosine 112 bears the Sulfotyrosine mark. Phenylalanine 118 is subject to Phenylalanine amide. The propeptide occupies 122–130; sequence SAEEYEYSS. Sulfotyrosine is present on residues tyrosine 126 and tyrosine 128.

Belongs to the gastrin/cholecystokinin family. In terms of processing, the precursor is cleaved by proteases to produce a number of active cholecystokinins. As to expression, highly concentrated in the duodenum. Also localized in more distal parts of the small intestine.

The protein resides in the secreted. Functionally, this peptide hormone induces gall bladder contraction and the release of pancreatic enzymes in the gut. Its function in the brain is not clear. In Struthio camelus (Common ostrich), this protein is Cholecystokinin (CCK).